We begin with the raw amino-acid sequence, 136 residues long: Transcription antitermination protein NusB (136 aa).

It belongs to the NusB family.

In terms of biological role, involved in transcription antitermination. Required for transcription of ribosomal RNA (rRNA) genes. Binds specifically to the boxA antiterminator sequence of the ribosomal RNA (rrn) operons. The chain is Transcription antitermination protein NusB from Paenarthrobacter aurescens (strain TC1).